A 134-amino-acid chain; its full sequence is Histone H3.3-like type 1 (134 aa).

Residues 1 to 25 are disordered; that stretch reads MARTKHTARKSFGGKAPRKSLATKA. N6-acetyllysine; alternate occurs at positions 5 and 10. 2 positions are modified to N6-methylated lysine; alternate: K5 and K10. S11 carries the phosphoserine modification. An N6-acetyllysine mark is found at K15 and K24. An N6-methylated lysine mark is found at K28 and K37.

This sequence belongs to the histone H3 family. In terms of assembly, the nucleosome is a histone octamer containing two molecules each of H2A, H2B, H3 and H4 assembled in one H3-H4 heterotetramer and two H2A-H2B heterodimers. The octamer wraps approximately 147 bp of DNA. Acetylation is generally linked to gene activation. Post-translationally, methylation at Lys-5 is linked to gene activation. Methylation at Lys-10 is linked to gene repression.

It is found in the nucleus. It localises to the chromosome. Its function is as follows. Putative variant histone H3 which may replace conventional H3 in a subset of nucleosomes. Nucleosomes wrap and compact DNA into chromatin, limiting DNA accessibility to the cellular machineries which require DNA as a template. Histones thereby play a central role in transcription regulation, DNA repair, DNA replication and chromosomal stability. DNA accessibility is regulated via a complex set of post-translational modifications of histones, also called histone code, and nucleosome remodeling. This is Histone H3.3-like type 1 (his-70) from Caenorhabditis elegans.